Consider the following 202-residue polypeptide: Recombination protein RecR (202 aa).

Residues 56–71 form a C4-type zinc finger; the sequence is CVVCGTVSDGELCRIC. The region spanning 79 to 179 is the Toprim domain; sequence TMICVVEEPK…TVTRLASGLP (101 aa).

The protein belongs to the RecR family.

May play a role in DNA repair. It seems to be involved in an RecBC-independent recombinational process of DNA repair. It may act with RecF and RecO. The polypeptide is Recombination protein RecR (Nocardia farcinica (strain IFM 10152)).